A 600-amino-acid chain; its full sequence is MEKLSALQEQKGELRKRLSYTTHKLEKLETEFDSTRHYLEIELRRAQEELDKVTEKLRRIQSNYMALQRINQELEDKLYRMGQHYEEEKRAMSHEIVALNSHLLEAKVTIDKLSEDNELYRKDCNLAAQLLQCSQTYGRVHKVSELPSDFQQRVSLHMEKHGCSLPSALCHPAYADSVPTCVIAKVLEKPDPGSLSSRMSDASARDLGYRDGVEKSGPRPPYKGDIYCSDPALYCPDEREHARRPSVDTPVTDVGFLRAQNSTDSAAEEEEEAEAAAFPEAYRREAYQGYAASLPTSSSYSSFSATSEEKEHAQAGTLTASQQAIYLSSRDEFFNRKPSATYGSGPRFAKAASTLGSPLEAQVAPGFARTVSPYPAEPYRYPASPGPQQALMPPNLWSLRAKPSGNRLAGEDIRGQWRPVSVEDVGAYSYQAGAAAGRAASPCNYSERYYGGGGGGGAAGGGSPGDKAEGRASPLYATYKADSFSEGDDLSQGHLAEPCFLRAGGDLSLSPSRSADALAGYAASDGDGDRLRVQLCGAGSSPEPEHGSRESLEPSSMEASPEMHPPTRLSPQQAFPRTGGSGLSRKDSLTKAQLYGTLLN.

Met-1 carries the post-translational modification N-acetylmethionine. The residue at position 137 (Tyr-137) is a Phosphotyrosine. The interval 192–222 (PGSLSSRMSDASARDLGYRDGVEKSGPRPPY) is disordered. Ser-200 bears the Phosphoserine mark. Residues 203–217 (SARDLGYRDGVEKSG) show a composition bias toward basic and acidic residues. Phosphoserine is present on residues Ser-229 and Ser-246. At Thr-249 the chain carries Phosphothreonine. Ser-265 carries the post-translational modification Phosphoserine. The interval 298–317 (SSYSSFSATSEEKEHAQAGT) is disordered. Ser-372 is subject to Phosphoserine. Arg-380 carries the post-translational modification Asymmetric dimethylarginine. A phosphoserine mark is found at Ser-463, Ser-473, Ser-483, Ser-485, Ser-508, Ser-510, and Ser-514. A disordered region spans residues 537–590 (GAGSSPEPEHGSRESLEPSSMEASPEMHPPTRLSPQQAFPRTGGSGLSRKDSLT). Over residues 543-552 (EPEHGSRESL) the composition is skewed to basic and acidic residues. Phosphoserine occurs at positions 560 and 570.

As to quaternary structure, interacts with DLG4 and DLGAP1 and forms a ternary complex.

The protein localises to the cytoplasm. Its subcellular location is the membrane. May sustain the structure of the postsynaptic density (PSD). This chain is Brain-enriched guanylate kinase-associated protein (Begain), found in Mus musculus (Mouse).